A 247-amino-acid polypeptide reads, in one-letter code: Adenosylcobinamide-GDP ribazoletransferase (247 aa).

The next 6 helical transmembrane spans lie at 34–54, 59–79, 113–133, 138–158, 171–193, and 194–214; these read IVTFPLIGMLLGAIGGLVFVA, CGIPLAALFCVLTLALLTGGF, GGLALIFVLLAKVLVISELAL, MLAALAMACAAGRGVAVLLMY, VFIGKVTGRQTCVTLGLTAILAA, and ILMPGMHGVAALVVTLAAIFI.

The protein belongs to the CobS family. Mg(2+) serves as cofactor.

The protein resides in the cell inner membrane. It catalyses the reaction alpha-ribazole + adenosylcob(III)inamide-GDP = adenosylcob(III)alamin + GMP + H(+). The enzyme catalyses alpha-ribazole 5'-phosphate + adenosylcob(III)inamide-GDP = adenosylcob(III)alamin 5'-phosphate + GMP + H(+). The protein operates within cofactor biosynthesis; adenosylcobalamin biosynthesis; adenosylcobalamin from cob(II)yrinate a,c-diamide: step 7/7. In terms of biological role, joins adenosylcobinamide-GDP and alpha-ribazole to generate adenosylcobalamin (Ado-cobalamin). Also synthesizes adenosylcobalamin 5'-phosphate from adenosylcobinamide-GDP and alpha-ribazole 5'-phosphate. The polypeptide is Adenosylcobinamide-GDP ribazoletransferase (Citrobacter koseri (strain ATCC BAA-895 / CDC 4225-83 / SGSC4696)).